We begin with the raw amino-acid sequence, 57 residues long: Ribulose bisphosphate carboxylase large chain (57 aa).

The propeptide occupies 1–2 (MS). Pro3 is modified (N-acetylproline). Lys14 carries the post-translational modification N6,N6,N6-trimethyllysine.

Belongs to the RuBisCO large chain family. Type I subfamily. In terms of assembly, heterohexadecamer of 8 large chains and 8 small chains.

Its subcellular location is the plastid. It is found in the chloroplast. The enzyme catalyses 2 (2R)-3-phosphoglycerate + 2 H(+) = D-ribulose 1,5-bisphosphate + CO2 + H2O. It catalyses the reaction D-ribulose 1,5-bisphosphate + O2 = 2-phosphoglycolate + (2R)-3-phosphoglycerate + 2 H(+). RuBisCO catalyzes two reactions: the carboxylation of D-ribulose 1,5-bisphosphate, the primary event in carbon dioxide fixation, as well as the oxidative fragmentation of the pentose substrate in the photorespiration process. Both reactions occur simultaneously and in competition at the same active site. In Camellia sinensis (Tea plant), this protein is Ribulose bisphosphate carboxylase large chain (rbcL).